The primary structure comprises 213 residues: Orotate phosphoribosyltransferase (213 aa).

Residue K26 participates in 5-phospho-alpha-D-ribose 1-diphosphate binding. 34–35 (FF) contacts orotate. Residues 72 to 73 (YK), R99, K100, K103, H105, and 124 to 132 (DDVITAGTA) each bind 5-phospho-alpha-D-ribose 1-diphosphate. 2 residues coordinate orotate: T128 and R156.

It belongs to the purine/pyrimidine phosphoribosyltransferase family. PyrE subfamily. Homodimer. The cofactor is Mg(2+).

The enzyme catalyses orotidine 5'-phosphate + diphosphate = orotate + 5-phospho-alpha-D-ribose 1-diphosphate. It functions in the pathway pyrimidine metabolism; UMP biosynthesis via de novo pathway; UMP from orotate: step 1/2. Catalyzes the transfer of a ribosyl phosphate group from 5-phosphoribose 1-diphosphate to orotate, leading to the formation of orotidine monophosphate (OMP). The sequence is that of Orotate phosphoribosyltransferase from Vibrio parahaemolyticus serotype O3:K6 (strain RIMD 2210633).